The primary structure comprises 79 residues: Major outer membrane lipoprotein Lpp 2 (79 aa).

The first 21 residues, 1 to 21, serve as a signal peptide directing secretion; that stretch reads MNRTNKLILGAVVLGSALLAG. C22 is lipidated: N-palmitoyl cysteine. Residue C22 is the site of S-diacylglycerol cysteine attachment. 2 consecutive repeats follow at residues 25–35 and 39–49; these read NAKIDQLSSDV and SAKVDQLSNDV. Positions 28 to 76 form a coiled coil; it reads IDQLSSDVQTLSAKVDQLSNDVNAMRSDIQAAKDDAARANQRLDNKVSR. Residues 60-79 are disordered; that stretch reads KDDAARANQRLDNKVSRVRK. K79 is subject to N6-murein peptidoglycan lysine.

The protein belongs to the Lpp family. As to quaternary structure, homotrimer.

Its subcellular location is the cell outer membrane. The protein localises to the secreted. It is found in the cell wall. In terms of biological role, a highly abundant outer membrane lipoprotein that controls the distance between the inner and outer membranes. The only protein known to be covalently linked to the peptidoglycan network (PGN). Also non-covalently binds the PGN. The link between the cell outer membrane and PGN contributes to maintenance of the structural and functional integrity of the cell envelope, and maintains the correct distance between the PGN and the outer membrane. This is Major outer membrane lipoprotein Lpp 2 from Salmonella paratyphi A (strain ATCC 9150 / SARB42).